The primary structure comprises 377 residues: Chaperone protein DnaJ (377 aa).

Residues 5 to 70 (DYYEVLGVGR…NKKAAYDQFG (66 aa)) enclose the J domain. The CR-type zinc-finger motif lies at 133–211 (GLTKELRIPT…CHGDGRVEKT (79 aa)). Positions 146, 149, 163, 166, 185, 188, 199, and 202 each coordinate Zn(2+). CXXCXGXG motif repeat units lie at residues 146–153 (CDVCDGSG), 163–170 (CGTCHGQG), 185–192 (CPTCHGRG), and 199–206 (CSKCHGDG).

Belongs to the DnaJ family. In terms of assembly, homodimer. It depends on Zn(2+) as a cofactor.

Its subcellular location is the cytoplasm. In terms of biological role, participates actively in the response to hyperosmotic and heat shock by preventing the aggregation of stress-denatured proteins and by disaggregating proteins, also in an autonomous, DnaK-independent fashion. Unfolded proteins bind initially to DnaJ; upon interaction with the DnaJ-bound protein, DnaK hydrolyzes its bound ATP, resulting in the formation of a stable complex. GrpE releases ADP from DnaK; ATP binding to DnaK triggers the release of the substrate protein, thus completing the reaction cycle. Several rounds of ATP-dependent interactions between DnaJ, DnaK and GrpE are required for fully efficient folding. Also involved, together with DnaK and GrpE, in the DNA replication of plasmids through activation of initiation proteins. The chain is Chaperone protein DnaJ from Shewanella sp. (strain ANA-3).